The sequence spans 624 residues: ATP-dependent zinc metalloprotease FtsH (624 aa).

Topologically, residues 1 to 7 (MPRAPFS) are cytoplasmic. A helical transmembrane segment spans residues 8-28 (LLALVLGLAFLAWAFSLAGTV). Topologically, residues 29 to 103 (GAPSGTVNYT…VRVEPPQGQN (75 aa)) are periplasmic. Residues 104–124 (ALGFLWPLLLVGLLIGALYYF) traverse the membrane as a helical segment. The Cytoplasmic portion of the chain corresponds to 125-624 (SRNGRAGPSD…VKPGGALGGA (500 aa)). ATP contacts are provided by residues Ala-159, 199 to 203 (GVGKT), and His-204. His-418 contributes to the Zn(2+) binding site. The active site involves Glu-419. Zn(2+) contacts are provided by His-422 and Asp-493. The tract at residues 595 to 624 (PLEAPEEAREEREPPRVVPKVKPGGALGGA) is disordered. The span at 600–609 (EEAREEREPP) shows a compositional bias: basic and acidic residues.

In the central section; belongs to the AAA ATPase family. This sequence in the C-terminal section; belongs to the peptidase M41 family. The isolated soluble domain (residues 126-624) forms a stable hexamer in which the AAA+ domains (residues 126-400) are alternatively open or closed. Zn(2+) serves as cofactor.

It is found in the cell inner membrane. The proteolytic activity is dependent on ATP, both the ATPase and protease activities are inhibited by ADP. In terms of biological role, acts as a processive, ATP-dependent zinc metallopeptidase for both cytoplasmic and membrane proteins. Plays a role in the quality control of integral membrane proteins. Its function is as follows. Degrades preferentially unfolded substrates in a processive, ATP-dependent manner, usually after hydrophobic residues. The chain is ATP-dependent zinc metalloprotease FtsH from Thermus thermophilus (strain ATCC 27634 / DSM 579 / HB8).